A 173-amino-acid chain; its full sequence is Ferritin-1 heavy chain (173 aa).

Residues 6-155 enclose the Ferritin-like diiron domain; it reads QNYHEECEAG…DYITNLIRVG (150 aa). Fe cation contacts are provided by Glu-23, Glu-58, His-61, Glu-103, and Gln-137.

It belongs to the ferritin family. In terms of assembly, oligomer of 24 subunits. The functional molecule forms a roughly spherical shell with a diameter of 12 nm and contains a central cavity into which the insoluble mineral iron core is deposited.

It catalyses the reaction 4 Fe(2+) + O2 + 4 H(+) = 4 Fe(3+) + 2 H2O. Stores iron in a soluble, non-toxic, readily available form. Important for iron homeostasis. Has ferroxidase activity. Iron is taken up in the ferrous form and deposited as ferric hydroxides after oxidation. This Schistosoma mansoni (Blood fluke) protein is Ferritin-1 heavy chain (SCM-1).